We begin with the raw amino-acid sequence, 190 residues long: Shikimate kinase (190 aa).

19-24 contributes to the ATP binding site; the sequence is GSGKTT. Thr23 provides a ligand contact to Mg(2+). Asp41, Arg65, and Gly87 together coordinate substrate. Arg124 contributes to the ATP binding site. Arg143 is a substrate binding site.

It belongs to the shikimate kinase family. As to quaternary structure, monomer. Requires Mg(2+) as cofactor.

The protein localises to the cytoplasm. The enzyme catalyses shikimate + ATP = 3-phosphoshikimate + ADP + H(+). It functions in the pathway metabolic intermediate biosynthesis; chorismate biosynthesis; chorismate from D-erythrose 4-phosphate and phosphoenolpyruvate: step 5/7. In terms of biological role, catalyzes the specific phosphorylation of the 3-hydroxyl group of shikimic acid using ATP as a cosubstrate. In Synechococcus sp. (strain ATCC 27144 / PCC 6301 / SAUG 1402/1) (Anacystis nidulans), this protein is Shikimate kinase.